Here is a 183-residue protein sequence, read N- to C-terminus: Ribosome-recycling factor (183 aa).

The segment at aspartate 134 to aspartate 156 is disordered.

It belongs to the RRF family.

Its subcellular location is the cytoplasm. Its function is as follows. Responsible for the release of ribosomes from messenger RNA at the termination of protein biosynthesis. May increase the efficiency of translation by recycling ribosomes from one round of translation to another. This Leptospira biflexa serovar Patoc (strain Patoc 1 / Ames) protein is Ribosome-recycling factor.